Here is a 601-residue protein sequence, read N- to C-terminus: ATP-dependent lipid A-core flippase (601 aa).

Positions Leu28–Arg328 constitute an ABC transmembrane type-1 domain. The next 6 membrane-spanning stretches (helical) occupy residues Val32–Ile52, Val81–Phe101, Ala160–Tyr180, Trp183–Val203, Ala267–Ala287, and Asp296–Ile316. The region spanning Leu360 to Met597 is the ABC transporter domain. Residue Gly394 to Ser401 participates in ATP binding.

This sequence belongs to the ABC transporter superfamily. Lipid exporter (TC 3.A.1.106) family. As to quaternary structure, homodimer.

It is found in the cell inner membrane. The catalysed reaction is ATP + H2O + lipid A-core oligosaccharideSide 1 = ADP + phosphate + lipid A-core oligosaccharideSide 2.. Its function is as follows. Involved in lipopolysaccharide (LPS) biosynthesis. Translocates lipid A-core from the inner to the outer leaflet of the inner membrane. Transmembrane domains (TMD) form a pore in the inner membrane and the ATP-binding domain (NBD) is responsible for energy generation. The sequence is that of ATP-dependent lipid A-core flippase from Shewanella oneidensis (strain ATCC 700550 / JCM 31522 / CIP 106686 / LMG 19005 / NCIMB 14063 / MR-1).